We begin with the raw amino-acid sequence, 120 residues long: Ribonuclease P protein component 2 (120 aa).

It belongs to the eukaryotic/archaeal RNase P protein component 2 family. As to quaternary structure, consists of a catalytic RNA component and at least 4-5 protein subunits. Forms a subcomplex with Rnp3 which stimulates the catalytic RNA.

Its subcellular location is the cytoplasm. It catalyses the reaction Endonucleolytic cleavage of RNA, removing 5'-extranucleotides from tRNA precursor.. Part of ribonuclease P, a protein complex that generates mature tRNA molecules by cleaving their 5'-ends. The RNA is catalytic, but its KM for pre-tRNA is 170-fold decreased in the presence of the 4 known protein subunits (Rnp1-4). The protein subunits also decrease the amount of Mg(2+) needed for activity. In Pyrococcus furiosus (strain ATCC 43587 / DSM 3638 / JCM 8422 / Vc1), this protein is Ribonuclease P protein component 2.